The primary structure comprises 341 residues: MKSVTLKELSLLLDGVVQGDETLVINSVATLEHATAGQISFLANSKYRAQLESTQASAVLLSAKDAQDYSGTALVVKDPYVGFARVAQLLDTTPKAAIGIHPSAQIDPSALLGEGVAIGANAVIGANVILGENVQIGAGTVIGQDCIIGSNTRLWANVTLYHNVHLGQDCIIHSGAIIGSDGFGYANERGQWIKIPQTGGVRIGDRVEIGASSTIDRGALGHTEIHNGVIIDNQVQVAHNDIIGENTAIAGSTTLAGSVTIGKHCIIGGNCAIAGHLTIADGVHLSGATNVTGNMREPGLYSSATVAMENKVWRKNTVRFRQLDELFQRVKTLEKNSNTPE.

The active-site Proton acceptor is the His-239.

This sequence belongs to the transferase hexapeptide repeat family. LpxD subfamily. As to quaternary structure, homotrimer.

The enzyme catalyses a UDP-3-O-[(3R)-3-hydroxyacyl]-alpha-D-glucosamine + a (3R)-hydroxyacyl-[ACP] = a UDP-2-N,3-O-bis[(3R)-3-hydroxyacyl]-alpha-D-glucosamine + holo-[ACP] + H(+). Its pathway is bacterial outer membrane biogenesis; LPS lipid A biosynthesis. In terms of biological role, catalyzes the N-acylation of UDP-3-O-acylglucosamine using 3-hydroxyacyl-ACP as the acyl donor. Is involved in the biosynthesis of lipid A, a phosphorylated glycolipid that anchors the lipopolysaccharide to the outer membrane of the cell. This is UDP-3-O-acylglucosamine N-acyltransferase from Shewanella sp. (strain MR-7).